A 913-amino-acid chain; its full sequence is MCAGTMKIISPSLTNSFFRCTLRFVACLFWIGYSQGTTHVLRFGGIFESVESGPSGAEELAFRFAVNTINRNRTLLPNTTITYDTQRINLYDSFEASRKACEQLSLGVAAIFGPSHSSSANAVQSICNALGVPHIQTRWKHQVSDNKDSFYVSLYPDFSSLSRAILDLVQFFKWKTVTIAYDDSTGLIRLQELIKAPSRYNLRLKIRQLPIDTKDAKPLLKEMKRGKEFHVIFDCSHDMAAGILKQALAMGMMTEYYHYIFTTLDLFALDVEPYRYSGVNMTGFRILNIENSQVLSIIEKWSMERLQAPPKPDSGLLDGFMTTDAALMYDAVHVASVAVQQFPQMTVSSLQCNRHKPWRFGARFINLIKEAHWEGLTGRITFNKTNGLRTDFDLDVISLKEEGLEKIGTWDPTSGLNMTDNQKGKPANITDSLSNRSLIVTTILEEPYVMFKKSDKPLYGKARFEGYCIDLLEKLSRILGFEYEVRLVEDGKYGAKDDSTQQWNGMVRELMDHKADLAVAPLAITYVREQVIDFTKPFMTLGIGILYRKPNGTNPGVFSFLNPLSPDIWMYILLAYLGVSCVLFVIARFSPYEWYNPHPCNPDSDVVENNFTLLNSFWFGVGALMQQGSELMPKALSTRIVGGIWWFFTLIIISSYTANLAAFLTVERMESPIDSADDLAKQTKIEYGAVQDGATMTFFKKSRIPTYEKMWAFMNSRSQSVLVKNNEEGIQRALTSDYAFLMESTTIEFVTQRNCNLTQIGGLIDSKGYGVGTPMGSPYRDKITIAILQLQEEGVLHMMKEKWWRGNGCPEEESKEASALGVQNIGGIFIVLAAGLVLSVFVAVGEFLYKSKKNAQLEKRSFCSAMVEELRMSLKCQRRLKHKPQPPVIVKTEEVINMHTFNDRRLPGKETMA.

Over 1–566 the chain is Extracellular; that stretch reads MCAGTMKIIS…VFSFLNPLSP (566 aa). Residues N72, N78, N280, N383, N417, N428, and N435 are each glycosylated (N-linked (GlcNAc...) asparagine). A disulfide bond links C101 and C352. P521, A523, and R528 together coordinate L-glutamate. N551 carries an N-linked (GlcNAc...) asparagine glycan. A helical transmembrane segment spans residues 567 to 587; it reads DIWMYILLAYLGVSCVLFVIA. Residues 588–643 are Cytoplasmic-facing; it reads RFSPYEWYNPHPCNPDSDVVENNFTLLNSFWFGVGALMQQGSELMPKALSTRIVGG. The helical transmembrane segment at 644–664 threads the bilayer; it reads IWWFFTLIIISSYTANLAAFL. At 665–824 the chain is on the extracellular side; it reads TVERMESPID…KEASALGVQN (160 aa). Positions 694, 695, and 743 each coordinate L-glutamate. The cysteines at positions 755 and 809 are disulfide-linked. N-linked (GlcNAc...) asparagine glycosylation occurs at N756. A helical transmembrane segment spans residues 825-845; that stretch reads IGGIFIVLAAGLVLSVFVAVG. Residues 846–913 lie on the Cytoplasmic side of the membrane; that stretch reads EFLYKSKKNA…RRLPGKETMA (68 aa).

It belongs to the glutamate-gated ion channel (TC 1.A.10.1) family. GRIK2 subfamily. In terms of assembly, homotetramer and heterotetramer with GRIK5. Tetramers may be formed by the dimerization of dimers.

The protein resides in the cell membrane. It localises to the postsynaptic cell membrane. It catalyses the reaction Ca(2+)(in) = Ca(2+)(out). The enzyme catalyses Na(+)(in) = Na(+)(out). Its activity is regulated as follows. Cold receptor activity activated by temperatures between 10-19 degrees Celsius. Functionally, ionotropic glutamate receptor that functions as a cation-permeable ligand-gated ion channel, gated by L-glutamate and the glutamatergic agonist kainic acid. L-glutamate acts as an excitatory neurotransmitter at many synapses in the central nervous system. Binding of the excitatory neurotransmitter L-glutamate induces a conformation change, leading to the opening of the cation channel, and thereby converts the chemical signal to an electrical impulse. The receptor then desensitizes rapidly and enters a transient inactive state, characterized by the presence of bound agonist. Its function is as follows. Independent of its ionotropic glutamate receptor activity, acts as a thermoreceptor conferring sensitivity to cold temperatures. Functions in dorsal root ganglion neurons. This is Glutamate receptor ionotropic, kainate 2 (grik2) from Xenopus laevis (African clawed frog).